The following is a 317-amino-acid chain: Melanocyte-stimulating hormone receptor (317 aa).

Residues 1-37 (MVWQGPQRRLLGSLNGTSPATPHFELAANQTGPRCLE) lie on the Extracellular side of the membrane. Residues N15 and N29 are each glycosylated (N-linked (GlcNAc...) asparagine). Residues 38–63 (VSIPNGLFLSLGLVSVVENVLVVAAI) form a helical membrane-spanning segment. Residues 64–72 (AKNRNLHSP) lie on the Cytoplasmic side of the membrane. Residues 73 to 93 (MYYFIGCLAVSDLLVSVTNVL) form a helical membrane-spanning segment. Residues 94–118 (ETAVMLLVEAGALAAQAAVVQQLDD) are Extracellular-facing. A helical transmembrane segment spans residues 119-140 (IIDVLICGSMVSSLCFLGAIAV). Topologically, residues 141–163 (DRYLSIFYALRYHSIVTLPRAWR) are cytoplasmic. Residues 164–183 (AISAIWVASVLSSTLFIAYY) form a helical membrane-spanning segment. Over 184 to 191 (NHTAVLLC) the chain is Extracellular. Residues 192-211 (LVSFFVAMLVLMAVLYVHML) form a helical membrane-spanning segment. Residues 212–240 (ARARQHARGIARLRKRQHSVHQGFGLKGA) are Cytoplasmic-facing. A helical transmembrane segment spans residues 241 to 266 (ATLTILLGIFFLCWGPFFLHLSLMVL). The Extracellular portion of the chain corresponds to 267–279 (CPQHPICGCVFQN). Residues 280–300 (FNLFLTLIICNSIIDPFIYAF) form a helical membrane-spanning segment. Topologically, residues 301 to 317 (RSQELRKTLQEVVLCSW) are cytoplasmic. A lipid anchor (S-palmitoyl cysteine) is attached at C315.

It belongs to the G-protein coupled receptor 1 family. As to quaternary structure, interacts with MGRN1, but does not undergo MGRN1-mediated ubiquitination; this interaction competes with GNAS-binding and thus inhibits agonist-induced cAMP production. Interacts with OPN3; the interaction results in a decrease in MC1R-mediated cAMP signaling and ultimately a decrease in melanin production in melanocytes.

It localises to the cell membrane. Its function is as follows. Receptor for MSH (alpha, beta and gamma) and ACTH. The activity of this receptor is mediated by G proteins which activate adenylate cyclase. Mediates melanogenesis, the production of eumelanin (black/brown) and phaeomelanin (red/yellow), via regulation of cAMP signaling in melanocytes. This chain is Melanocyte-stimulating hormone receptor (MC1R), found in Canis lupus familiaris (Dog).